The primary structure comprises 164 residues: Cytochrome c-type biogenesis protein CcmE (164 aa).

Topologically, residues 1–8 (MNPRRKQR) are cytoplasmic. The chain crosses the membrane as a helical; Signal-anchor for type II membrane protein span at residues 9-29 (LAVVGIIGFLIVSAVGLMLYA). At 30–164 (LNDSIDLFYT…YESSNGAGSK (135 aa)) the chain is on the periplasmic side. Heme is bound by residues histidine 128 and tyrosine 132. The segment at 142 to 164 (KGIKHVKPENMPTYESSNGAGSK) is disordered. The segment covering 154-164 (TYESSNGAGSK) has biased composition (polar residues).

This sequence belongs to the CcmE/CycJ family.

It is found in the cell inner membrane. In terms of biological role, heme chaperone required for the biogenesis of c-type cytochromes. Transiently binds heme delivered by CcmC and transfers the heme to apo-cytochromes in a process facilitated by CcmF and CcmH. This is Cytochrome c-type biogenesis protein CcmE from Alteromonas mediterranea (strain DSM 17117 / CIP 110805 / LMG 28347 / Deep ecotype).